The following is a 188-amino-acid chain: UPF0301 protein XC_1365 (188 aa).

It belongs to the UPF0301 (AlgH) family.

This chain is UPF0301 protein XC_1365, found in Xanthomonas campestris pv. campestris (strain 8004).